Reading from the N-terminus, the 260-residue chain is MLRKGDVNRVANAYWCVVAGSEIWLVDGAVPFGSAEQFSLPEENARQIGDYLGSPVMWINFADLEQDLPLVSLRDCLHFPEPLFMLLSKAIQYGHMTQSLRFCPQCGGRNFLNNNQFAMQCGECRTLHYPRIFPCIIVAVRKENQILLAQHPRHRNGMYTVIAGFLEAGETLEDCVAREVHEETGIHVKNIRYFGSQPWAFPSSMMMAFLADYDSGELNPDYTELSDAQWFGVKEMPPVAPTGTIARALIEQTISDILSD.

R74 serves as a coordination point for substrate. 4 residues coordinate Zn(2+): C103, C106, C121, and C124. Substrate is bound at residue Y129. Residues 130–253 (PRIFPCIIVA…TIARALIEQT (124 aa)) enclose the Nudix hydrolase domain. The a divalent metal cation site is built by A163, E179, and E183. The short motif at 164 to 185 (GFLEAGETLEDCVAREVHEETG) is the Nudix box element. 197–204 (QPWAFPSS) contributes to the substrate binding site. E224 lines the a divalent metal cation pocket. A246 lines the substrate pocket.

This sequence belongs to the Nudix hydrolase family. NudC subfamily. Homodimer. Mg(2+) is required as a cofactor. Requires Mn(2+) as cofactor. The cofactor is Zn(2+).

The catalysed reaction is a 5'-end NAD(+)-phospho-ribonucleoside in mRNA + H2O = a 5'-end phospho-adenosine-phospho-ribonucleoside in mRNA + beta-nicotinamide D-ribonucleotide + 2 H(+). It carries out the reaction NAD(+) + H2O = beta-nicotinamide D-ribonucleotide + AMP + 2 H(+). The enzyme catalyses NADH + H2O = reduced beta-nicotinamide D-ribonucleotide + AMP + 2 H(+). MRNA decapping enzyme that specifically removes the nicotinamide adenine dinucleotide (NAD) cap from a subset of mRNAs by hydrolyzing the diphosphate linkage to produce nicotinamide mononucleotide (NMN) and 5' monophosphate mRNA. The NAD-cap is present at the 5'-end of some mRNAs and stabilizes RNA against 5'-processing. Has preference for mRNAs with a 5'-end purine. Catalyzes the hydrolysis of a broad range of dinucleotide pyrophosphates. This Vibrio parahaemolyticus serotype O3:K6 (strain RIMD 2210633) protein is NAD-capped RNA hydrolase NudC.